The following is a 38-amino-acid chain: MKVRASVKKMCDKCRVIRRHGRVMVICTASPRHKQRQG.

It belongs to the bacterial ribosomal protein bL36 family.

In Prochlorococcus marinus (strain MIT 9515), this protein is Large ribosomal subunit protein bL36B.